Reading from the N-terminus, the 75-residue chain is uncharacterized protein (75 aa).

The region spanning 29–72 (EVYHVESGDTLWTIAKSFEIPVQQLMNLNKLSSDRIYPGQIIKI) is the LysM domain.

This is an uncharacterized protein from Bacillus subtilis (strain 168).